We begin with the raw amino-acid sequence, 483 residues long: MHLDQLLRDIPAKIYGKVESIPVRNLTRDSRCTGVGDIFIARQGQMCNGNDYSGQAVENGAIAILSSLYNPFLSVVQIVTEDLTALEACLAARFYNDPSKRLDVIGVTGTNGKTTVSALARELMEYKGRCTGLVGTIEHILGEHRIIDSFTTPDAILLQKYFAEMVKQNLSSAVVEVSSIGLALGRVRETEFLAGVLTNVSLDHLDFHGSFEEYVVAKKQLFVSLPEHGVAVVNSDCEYAQSFLEISPARGVSYAVHQEADYRAVNLKFSSLGSTFDILYQGNVFSCETSLVGEHNVYNVLAALSVVHQILGGDFAELVHYVRYLSAPKGRLEPVLSGPCPIYIDYAHTPDALDNVCKILSQLLPADGRLIIVFGCGGDRDHSKRPIMAKVAETYGFSVVTSDNPRTEDPDQIIADICSGFSTDRYVIESDRRLAIVKAISMALDKDIVLVAGKGHEVYQIFKHQTIVFDDREVVCEALASIY.

Residue Ser30 participates in UDP-N-acetyl-alpha-D-muramoyl-L-alanyl-D-glutamate binding. 109 to 115 (GTNGKTT) is a binding site for ATP. UDP-N-acetyl-alpha-D-muramoyl-L-alanyl-D-glutamate is bound by residues 151 to 152 (TT), Ser178, and Arg186. The residue at position 218 (Lys218) is an N6-carboxylysine. Residues Arg380, 403–406 (DNPR), Gly453, and Glu457 each bind meso-2,6-diaminopimelate. The Meso-diaminopimelate recognition motif motif lies at 403 to 406 (DNPR).

This sequence belongs to the MurCDEF family. MurE subfamily. Requires Mg(2+) as cofactor. Post-translationally, carboxylation is probably crucial for Mg(2+) binding and, consequently, for the gamma-phosphate positioning of ATP.

It is found in the cytoplasm. The enzyme catalyses UDP-N-acetyl-alpha-D-muramoyl-L-alanyl-D-glutamate + meso-2,6-diaminopimelate + ATP = UDP-N-acetyl-alpha-D-muramoyl-L-alanyl-gamma-D-glutamyl-meso-2,6-diaminopimelate + ADP + phosphate + H(+). It functions in the pathway cell wall biogenesis; peptidoglycan biosynthesis. In terms of biological role, catalyzes the addition of meso-diaminopimelic acid to the nucleotide precursor UDP-N-acetylmuramoyl-L-alanyl-D-glutamate (UMAG) in the biosynthesis of bacterial cell-wall peptidoglycan. In Chlamydia muridarum (strain MoPn / Nigg), this protein is UDP-N-acetylmuramoyl-L-alanyl-D-glutamate--2,6-diaminopimelate ligase.